Here is a 697-residue protein sequence, read N- to C-terminus: Zinc finger and BTB domain-containing protein 24 (697 aa).

The region spanning 10–133 (GQLVVHSDAH…AYTDFQNNHS (124 aa)) is the BTB domain. The segment covering 131–142 (NHSSPKPTTLNT) has biased composition (polar residues). Disordered regions lie at residues 131-176 (NHSS…EEKS) and 209-254 (EQIA…SRYS). Positions 159-171 (KRKRGRPKKVNTL) form a DNA-binding region, a.T hook. The span at 212-245 (AAKEKEESEPTCEPSREEEMPVEKDENYDPKTED) shows a compositional bias: basic and acidic residues. C2H2-type zinc fingers lie at residues 294 to 316 (ARCKDCGKVFKYNHFLAIHQRSH), 322 to 344 (FKCNECGKGFAQKHSLQVHTRMH), 350 to 372 (YTCTVCSKALTTKHSLLEHMSLH), 378 to 400 (FTCDQCGKYFSQNRQLKSHYRVH), 406 to 428 (PECKDCHRKFMDVSQLKKHLRTH), 434 to 456 (FTCEICGKSFTAKSSLQTHIRIH), 462 to 484 (YSCGICGKSFSDSSAKRRHCILH), and 490 to 512 (FSCPECNLQFARLDNLKAHLKIH). The segment at 652–697 (QEQTEELHLATSTSDPAQHLQLTQEPGPPPPTHHVPQPTPLGQEQS) is disordered. A compositionally biased stretch (pro residues) spans 677 to 690 (PGPPPPTHHVPQPT).

Belongs to the krueppel C2H2-type zinc-finger protein family. Interacts with MN1. In terms of tissue distribution, widely expressed, with highest levels in naive B-cells.

The protein resides in the nucleus. May be involved in BMP2-induced transcription. This chain is Zinc finger and BTB domain-containing protein 24 (ZBTB24), found in Homo sapiens (Human).